The primary structure comprises 477 residues: Protein kinase C and casein kinase substrate in neurons protein 2 (477 aa).

In terms of domain architecture, F-BAR spans 11 to 282; that stretch reads VEVSSDSFWE…AIKSADAMED (272 aa). Residues 25–274 are a coiled coil; it reads KRTVKRIDDG…SIYRELEYAI (250 aa). Basic and acidic residues-rich tracts occupy residues 163-176 and 186-216; these read CKEE…ETNS and QLKK…KDLD. Disordered stretches follow at residues 163–218 and 314–412; these read CKEE…LDGT and RREK…PFDE. Over residues 328–341 the composition is skewed to low complexity; it reads GISQSGEQSSIQNQ. The span at 342–357 shows a compositional bias: polar residues; the sequence is HSSHLSVQSAQSTNNP. Residues 356 to 358 carry the NPF1 motif; it reads NPF. Residues 370–388 show a composition bias toward basic and acidic residues; it reads TENKKIENVGSYEKTHPAE. Positions 395-407 are enriched in polar residues; the sequence is NNPFNPSDTNGDN. The short motif at 396–398 is the NPF2 element; the sequence is NPF. Residues 408–410 carry the NPF3 motif; the sequence is NPF. One can recognise an SH3 domain in the interval 417 to 477; sequence TLEVRVRALY…YPANYVESVQ (61 aa).

The protein belongs to the PACSIN family. Interacts with adam13 through the SH3 domains. Phosphorylated. In terms of tissue distribution, ubiquitously expressed with higher expression in the ectoderm, the neuroectoderm, and dorsal mesoderm layers.

The protein resides in the cytoplasm. The protein localises to the cytoskeleton. Its subcellular location is the cytoplasmic vesicle membrane. It localises to the cell projection. It is found in the ruffle membrane. The protein resides in the early endosome. The protein localises to the recycling endosome membrane. Its subcellular location is the cell membrane. It localises to the membrane. It is found in the caveola. The protein resides in the cell junction. The protein localises to the adherens junction. Its function is as follows. Regulates the morphogenesis and endocytosis of caveolae. Lipid-binding protein that is able to promote the tubulation of the phosphatidic acid-containing membranes it preferentially binds. Plays a role in intracellular vesicle-mediated transport. Involved in the endocytosis of cell-surface receptors like the EGF receptor, contributing to its internalization in the absence of EGF stimulus. This is Protein kinase C and casein kinase substrate in neurons protein 2 (pacsin2) from Xenopus laevis (African clawed frog).